A 116-amino-acid chain; its full sequence is Large ribosomal subunit protein bL17 (116 aa).

It belongs to the bacterial ribosomal protein bL17 family. Part of the 50S ribosomal subunit. Contacts protein L32.

The chain is Large ribosomal subunit protein bL17 from Rippkaea orientalis (strain PCC 8801 / RF-1) (Cyanothece sp. (strain PCC 8801)).